Here is a 414-residue protein sequence, read N- to C-terminus: Serine/threonine transporter SstT (414 aa).

8 consecutive transmembrane segments (helical) span residues 22 to 42, 54 to 74, 89 to 109, 148 to 168, 189 to 209, 223 to 243, 305 to 325, and 337 to 357; these read GLVL…TIGF, IFVK…VMAA, IIVL…IAGF, AIFK…GLAL, IVHV…AETL, LLAV…PILV, MAGA…TLGL, and IVAA…LLLI.

Belongs to the dicarboxylate/amino acid:cation symporter (DAACS) (TC 2.A.23) family.

The protein resides in the cell inner membrane. It catalyses the reaction L-serine(in) + Na(+)(in) = L-serine(out) + Na(+)(out). The catalysed reaction is L-threonine(in) + Na(+)(in) = L-threonine(out) + Na(+)(out). Functionally, involved in the import of serine and threonine into the cell, with the concomitant import of sodium (symport system). The sequence is that of Serine/threonine transporter SstT from Haemophilus influenzae (strain PittEE).